The following is a 495-amino-acid chain: Phage-like element PBSX protein XkdE (495 aa).

The protein belongs to the phage portal family. PBSX subfamily.

This is Phage-like element PBSX protein XkdE (xkdE) from Bacillus subtilis (strain 168).